The sequence spans 230 residues: Orotidine 5'-phosphate decarboxylase (230 aa).

Residues D10, K32, 59–68 (DLKFHDIPRT), T116, R177, Q186, G206, and R207 each bind substrate. K61 (proton donor) is an active-site residue.

The protein belongs to the OMP decarboxylase family. Type 1 subfamily. Homodimer.

The enzyme catalyses orotidine 5'-phosphate + H(+) = UMP + CO2. It participates in pyrimidine metabolism; UMP biosynthesis via de novo pathway; UMP from orotate: step 2/2. Functionally, catalyzes the decarboxylation of orotidine 5'-monophosphate (OMP) to uridine 5'-monophosphate (UMP). The sequence is that of Orotidine 5'-phosphate decarboxylase from Methylacidiphilum infernorum (isolate V4) (Methylokorus infernorum (strain V4)).